Reading from the N-terminus, the 148-residue chain is UPF0756 membrane protein NMC1845 (148 aa).

Helical transmembrane passes span 13–35 (LILL…LLLM), 50–70 (HGLN…LVSG), 80–100 (FLNF…WLAG), and 121–141 (VIGV…AGIL).

This sequence belongs to the UPF0756 family.

The protein localises to the cell membrane. The sequence is that of UPF0756 membrane protein NMC1845 from Neisseria meningitidis serogroup C / serotype 2a (strain ATCC 700532 / DSM 15464 / FAM18).